Here is a 138-residue protein sequence, read N- to C-terminus: Acidic phospholipase A2 VP7 (138 aa).

The N-terminal stretch at 1–16 (MRTLWIVAVCLMGVEG) is a signal peptide. 7 disulfide bridges follow: C42/C131, C44/C60, C59/C111, C65/C138, C66/C104, C73/C97, and C91/C102. Ca(2+) is bound by residues Y43, G45, and G47. The active site involves H63. D64 serves as a coordination point for Ca(2+). Residue D105 is part of the active site.

It belongs to the phospholipase A2 family. Group II subfamily. D49 sub-subfamily. As to quaternary structure, does not form a complex. Ca(2+) serves as cofactor. In terms of tissue distribution, expressed by the venom gland.

It localises to the secreted. It carries out the reaction a 1,2-diacyl-sn-glycero-3-phosphocholine + H2O = a 1-acyl-sn-glycero-3-phosphocholine + a fatty acid + H(+). Its function is as follows. Snake venom phospholipase A2 (PLA2) that is not toxic by itself, but the synergistical mixture of a basic and this acidic protein is lethal. PLA2 catalyzes the calcium-dependent hydrolysis of the 2-acyl groups in 3-sn-phosphoglycerides. This is Acidic phospholipase A2 VP7 from Daboia palaestinae (Palestine viper).